Here is a 263-residue protein sequence, read N- to C-terminus: UPF0739 protein C1orf74 homolog (263 aa).

Belongs to the UPF0739 family.

In Rattus norvegicus (Rat), this protein is UPF0739 protein C1orf74 homolog.